We begin with the raw amino-acid sequence, 449 residues long: Bifunctional protein GlmU (449 aa).

The tract at residues 1 to 226 is pyrophosphorylase; that stretch reads MNNIHAIILA…KFEVLGVNDK (226 aa). Residues 9–12, K23, Q73, 78–79, 100–102, G137, E151, N166, and N224 each bind UDP-N-acetyl-alpha-D-glucosamine; these read LAAG, GT, and YGD. D102 contributes to the Mg(2+) binding site. Mg(2+) is bound at residue N224. The interval 227–247 is linker; that stretch reads VQLAELERLFQKDQAIQFMKQ. The tract at residues 248-449 is N-acetyltransferase; sequence GLGLKDPTRF…QKNLKYRSKK (202 aa). UDP-N-acetyl-alpha-D-glucosamine is bound by residues R330 and K348. The active-site Proton acceptor is the H360. Y363 and N374 together coordinate UDP-N-acetyl-alpha-D-glucosamine. Residues A377, 383-384, S402, A420, and R437 each bind acetyl-CoA; that span reads NY.

This sequence in the N-terminal section; belongs to the N-acetylglucosamine-1-phosphate uridyltransferase family. In the C-terminal section; belongs to the transferase hexapeptide repeat family. In terms of assembly, homotrimer. Mg(2+) is required as a cofactor.

It is found in the cytoplasm. The enzyme catalyses alpha-D-glucosamine 1-phosphate + acetyl-CoA = N-acetyl-alpha-D-glucosamine 1-phosphate + CoA + H(+). It catalyses the reaction N-acetyl-alpha-D-glucosamine 1-phosphate + UTP + H(+) = UDP-N-acetyl-alpha-D-glucosamine + diphosphate. Its pathway is nucleotide-sugar biosynthesis; UDP-N-acetyl-alpha-D-glucosamine biosynthesis; N-acetyl-alpha-D-glucosamine 1-phosphate from alpha-D-glucosamine 6-phosphate (route II): step 2/2. The protein operates within nucleotide-sugar biosynthesis; UDP-N-acetyl-alpha-D-glucosamine biosynthesis; UDP-N-acetyl-alpha-D-glucosamine from N-acetyl-alpha-D-glucosamine 1-phosphate: step 1/1. It functions in the pathway bacterial outer membrane biogenesis; LPS lipid A biosynthesis. Catalyzes the last two sequential reactions in the de novo biosynthetic pathway for UDP-N-acetylglucosamine (UDP-GlcNAc). The C-terminal domain catalyzes the transfer of acetyl group from acetyl coenzyme A to glucosamine-1-phosphate (GlcN-1-P) to produce N-acetylglucosamine-1-phosphate (GlcNAc-1-P), which is converted into UDP-GlcNAc by the transfer of uridine 5-monophosphate (from uridine 5-triphosphate), a reaction catalyzed by the N-terminal domain. The chain is Bifunctional protein GlmU from Vesicomyosocius okutanii subsp. Calyptogena okutanii (strain HA).